Here is a 367-residue protein sequence, read N- to C-terminus: Outer membrane porin C (367 aa).

The signal sequence occupies residues 1–21; the sequence is MKVKVLSLLVPALLVAGAANA. Over 22 to 33 the chain is Periplasmic; sequence AEVYNKDGNKLD. Residues 34 to 42 form a beta stranded membrane-spanning segment; it reads LYGKVDGLH. Over 43–53 the chain is Extracellular; the sequence is YFSDNKDVDGD. Residues 54–63 form a beta stranded membrane-spanning segment; sequence QTYMRLGFKG. The Periplasmic portion of the chain corresponds to 64–73; sequence ETQVTDQLTG. Residues 74–84 traverse the membrane as a beta stranded segment; sequence YGQWEYQIQGN. Residues 85–91 are Extracellular-facing; it reads SAENENN. A beta stranded membrane pass occupies residues 92–101; it reads SWTRVAFAGL. The Periplasmic portion of the chain corresponds to 102–106; that stretch reads KFQDV. Residues 107–115 traverse the membrane as a beta stranded segment; that stretch reads GSFDYGRNY. The tract at residues 116–133 is loop L3; may constrict the pore; sequence GVVYDVTSWTDVLPEFGG. The Extracellular portion of the chain corresponds to 116–141; sequence GVVYDVTSWTDVLPEFGGDTYGSDNF. The beta stranded transmembrane segment at 142–154 threads the bilayer; it reads MQQRGNGFATYRN. Residues 155-163 lie on the Periplasmic side of the membrane; sequence TDFFGLVDG. A beta stranded membrane pass occupies residues 164–171; that stretch reads LNFAVQYQ. Residues 172–200 lie on the Extracellular side of the membrane; it reads GKNGNPSGEGFTSGVTNNGRDALRQNGDG. A beta stranded transmembrane segment spans residues 201-207; sequence VGGSITY. Residues 208–211 lie on the Periplasmic side of the membrane; it reads DYEG. Residues 212–219 traverse the membrane as a beta stranded segment; the sequence is FGIGGAIS. Residues 220–241 are Extracellular-facing; it reads SSKRTDAQNTAAYIGNGDRAET. Residues 242–248 form a beta stranded membrane-spanning segment; that stretch reads YTGGLKY. The Periplasmic segment spans residues 249 to 252; that stretch reads DANN. Residues 253-260 form a beta stranded membrane-spanning segment; sequence IYLAAQYT. Over 261-269 the chain is Extracellular; the sequence is QTYNATRVG. The beta stranded transmembrane segment at 270–286 threads the bilayer; it reads SLGWANKAQNFEAVAQY. Residues 287–291 are Periplasmic-facing; sequence QFDFG. The beta stranded transmembrane segment at 292–299 threads the bilayer; that stretch reads LRPSLAYL. The Extracellular portion of the chain corresponds to 300-318; that stretch reads QSKGKNLGRGYDDEDILKY. The beta stranded transmembrane segment at 319–326 threads the bilayer; the sequence is VDVGATYY. Over 327-330 the chain is Periplasmic; the sequence is FNKN. A beta stranded membrane pass occupies residues 331–338; it reads MSTYVDYK. Over 339-358 the chain is Extracellular; that stretch reads INLLDDNQFTRDAGINTDNI. Mg(2+)-binding residues include asparagine 340, leucine 342, and threonine 355. The chain crosses the membrane as a beta stranded span at residues 359–366; that stretch reads VALGLVYQ. Position 367 (phenylalanine 367) is a topological domain, periplasmic.

Belongs to the Gram-negative porin family. In terms of assembly, homotrimer. Forms mixed heterotrimers with OmpF and with PhoE; other mixed heterotrimers are also probable.

The protein resides in the cell outer membrane. In terms of biological role, forms pores that allow passive diffusion of small molecules across the outer membrane. (Microbial infection) Supports colicin E5 entry in the absence of its major receptor OmpF. Functionally, (Microbial infection) A mixed OmpC-OmpF heterotrimer is the outer membrane receptor for toxin CdiA-EC536; polymorphisms in extracellular loops 4 and 5 of OmpC confer susceptibility to CdiA-EC536-mediated toxicity. This chain is Outer membrane porin C (ompC), found in Escherichia coli (strain K12).